The sequence spans 162 residues: Small ribosomal subunit protein uS13 (162 aa).

The tract at residues 142–162 (RGQRTKSTGRRGSTVGVSRKK) is disordered.

Belongs to the universal ribosomal protein uS13 family. As to quaternary structure, part of the 30S ribosomal subunit. Forms a loose heterodimer with protein S19. Forms two bridges to the 50S subunit in the 70S ribosome.

Functionally, located at the top of the head of the 30S subunit, it contacts several helices of the 16S rRNA. In the 70S ribosome it contacts the 23S rRNA (bridge B1a) and protein L5 of the 50S subunit (bridge B1b), connecting the 2 subunits; these bridges are implicated in subunit movement. In Methanosarcina acetivorans (strain ATCC 35395 / DSM 2834 / JCM 12185 / C2A), this protein is Small ribosomal subunit protein uS13.